Here is a 372-residue protein sequence, read N- to C-terminus: Recombinase Flp protein (372 aa).

The Tyr recombinase Flp-type domain maps to 85-367; sequence GGHNAVAEEI…EYVHSYAMGK (283 aa). Tyr-292 (O-(3'-phospho-DNA)-tyrosine intermediate) is an active-site residue.

The protein belongs to the 'phage' integrase family.

Functionally, catalyzes the recombination between the large inverted repetitions of the plasmid. The sequence is that of Recombinase Flp protein from Lachancea fermentati (Zygosaccharomyces fermentati).